A 455-amino-acid chain; its full sequence is Bifunctional protein GlmU (455 aa).

Residues 1–232 are pyrophosphorylase; that stretch reads MASTTGALIL…DPNLLGVNNP (232 aa). UDP-N-acetyl-alpha-D-glucosamine contacts are provided by residues 10–13, Lys24, Gln75, and 80–81; these read LAAG and GT. Asp106 contacts Mg(2+). UDP-N-acetyl-alpha-D-glucosamine-binding residues include Gly141, Glu155, Asn172, and Asn230. Asn230 is a Mg(2+) binding site. The linker stretch occupies residues 233 to 253; sequence AELIRSEALLRTRLVIGHIEG. An N-acetyltransferase region spans residues 254–455; sequence GVLIHAPETV…QTNLPRKPKA (202 aa). Residues Arg336 and Lys354 each contribute to the UDP-N-acetyl-alpha-D-glucosamine site. Catalysis depends on His366, which acts as the Proton acceptor. Tyr369 and Asn380 together coordinate UDP-N-acetyl-alpha-D-glucosamine. Residues Ala383, 389 to 390, Ser408, Ala426, and Arg443 contribute to the acetyl-CoA site; that span reads NY.

It in the N-terminal section; belongs to the N-acetylglucosamine-1-phosphate uridyltransferase family. This sequence in the C-terminal section; belongs to the transferase hexapeptide repeat family. As to quaternary structure, homotrimer. Mg(2+) serves as cofactor.

The protein resides in the cytoplasm. It carries out the reaction alpha-D-glucosamine 1-phosphate + acetyl-CoA = N-acetyl-alpha-D-glucosamine 1-phosphate + CoA + H(+). It catalyses the reaction N-acetyl-alpha-D-glucosamine 1-phosphate + UTP + H(+) = UDP-N-acetyl-alpha-D-glucosamine + diphosphate. Its pathway is nucleotide-sugar biosynthesis; UDP-N-acetyl-alpha-D-glucosamine biosynthesis; N-acetyl-alpha-D-glucosamine 1-phosphate from alpha-D-glucosamine 6-phosphate (route II): step 2/2. It participates in nucleotide-sugar biosynthesis; UDP-N-acetyl-alpha-D-glucosamine biosynthesis; UDP-N-acetyl-alpha-D-glucosamine from N-acetyl-alpha-D-glucosamine 1-phosphate: step 1/1. The protein operates within bacterial outer membrane biogenesis; LPS lipid A biosynthesis. Functionally, catalyzes the last two sequential reactions in the de novo biosynthetic pathway for UDP-N-acetylglucosamine (UDP-GlcNAc). The C-terminal domain catalyzes the transfer of acetyl group from acetyl coenzyme A to glucosamine-1-phosphate (GlcN-1-P) to produce N-acetylglucosamine-1-phosphate (GlcNAc-1-P), which is converted into UDP-GlcNAc by the transfer of uridine 5-monophosphate (from uridine 5-triphosphate), a reaction catalyzed by the N-terminal domain. This is Bifunctional protein GlmU from Nitratidesulfovibrio vulgaris (strain ATCC 29579 / DSM 644 / CCUG 34227 / NCIMB 8303 / VKM B-1760 / Hildenborough) (Desulfovibrio vulgaris).